The chain runs to 1214 residues: NBPF family member NBPF1 (1214 aa).

Residues 70-128 are a coiled coil; the sequence is MLRNERQFKEEKLAEQLKQAEELRQYKVLVHSQERELTQLREKLREGRDASRSLNQHLQ. The tract at residues 162 to 200 is disordered; the sequence is LSPENDEDEDEDVQVEEAEKVLESSAPREVQKAEESKVP. Positions 165–177 are enriched in acidic residues; the sequence is ENDEDEDEDVQVE. An Olduvai 1 domain is found at 165 to 259; it reads ENDEDEDEDV…ECQDAVNILP (95 aa). A compositionally biased stretch (basic and acidic residues) spans 190-200; sequence EVQKAEESKVP. The stretch at 292 to 399 forms a coiled coil; that stretch reads NEKLHPQLAE…ASRSLNQHLQ (108 aa). The interval 433–471 is disordered; the sequence is LSPENDEDEDEDVQVEEAEKVLESSAPREVQKAEESKVP. The segment covering 436–448 has biased composition (acidic residues); sequence ENDEDEDEDVQVE. Residues 436–530 enclose the Olduvai 2 domain; that stretch reads ENDEDEDEDV…ECQDAVNILP (95 aa). Residues 461 to 471 show a composition bias toward basic and acidic residues; that stretch reads EVQKAEESKVP. The stretch at 610-670 forms a coiled coil; it reads KSMLRNERQF…ASCSLNQHLQ (61 aa). Olduvai domains lie at 707-799, 800-888, 891-946, 947-1038, 1041-1114, and 1116-1214; these read ENDN…HIIP, ENES…ATGP, SREL…LDMD, EIEK…PPCP, SREL…RSTK, and RRRR…IFPQ. 2 disordered regions span residues 722 to 746 and 791 to 837; these read EKVQ…EDSL and WEDA…EGYS. 2 stretches are compositionally biased toward acidic residues: residues 801–810 and 821–833; these read NESDDEEEEE and ESEE…ESWD. Residues 1102–1121 are compositionally biased toward basic residues; that stretch reads GKGKKRRGRRSTKKRRRRGR. The interval 1102-1136 is disordered; sequence GKGKKRRGRRSTKKRRRRGRKEGEEDQNPPCPRLS.

It belongs to the NBPF family. In terms of tissue distribution, widely expressed. The only tissue which shows a weak expression is kidney.

Its subcellular location is the cytoplasm. This chain is NBPF family member NBPF1, found in Homo sapiens (Human).